Consider the following 79-residue polypeptide: Conotoxin 12 (79 aa).

A signal peptide spans 1–22 (MKLTCVLIITVLFLTASQLITA). The propeptide occupies 23–47 (DYSRDQRQYRAVRLGDEMRNFKGAR). Intrachain disulfides connect cysteine 49–cysteine 62, cysteine 56–cysteine 67, and cysteine 61–cysteine 77.

This sequence belongs to the conotoxin O1 superfamily. Expressed by the venom duct.

Its subcellular location is the secreted. The sequence is that of Conotoxin 12 from Conus vexillum (Flag cone).